Reading from the N-terminus, the 271-residue chain is MVSKTWICGFISIITVVQALSCEKHDVLKKYQVGKFSSLTSTERDTPPSTTIEKWWINVCEEHNVEPPEECKKNDMLCGLTDVILPGKDAITTQIIDFDKNIGFNVEETESALTLTLKGATWGANSFDAKLEFQCNDNMKQDELTSHTWADKSIQLTLKGPSGCLKSKDDDKKNGDGDNGKDGDSEGKKPAKKAGGTSWFTWLFLYALLFTLIYLMVVSFLNTRGGSFQDFRAEFIQRSTQFLTSLPEFCKEVVSRILGRSTAQRGGYSAV.

The first 19 residues, M1–A19, serve as a signal peptide directing secretion. The MRH domain occupies L20–K166. Topologically, residues L20 to W199 are lumenal. 3 disulfide bridges follow: C22-C60, C71-C78, and C135-C164. Positions P161–A194 are disordered. Positions K166–K189 are enriched in basic and acidic residues. The helical transmembrane segment at F200–F220 threads the bilayer. Residues L221–V271 lie on the Cytoplasmic side of the membrane.

This sequence belongs to the ATG27 family. In terms of assembly, forms a complex with ATG9 and ATG23.

It localises to the cytoplasmic vesicle membrane. It is found in the golgi apparatus membrane. The protein resides in the mitochondrion membrane. Its subcellular location is the preautophagosomal structure membrane. Functionally, effector of VPS34 phosphatidylinositol 3-phosphate kinase signaling. Regulates the cytoplasm to vacuole transport (Cvt) vesicle formation. Plays a role in ATG protein retrieval from the pre-autophagosomal structure (PAS) and is especially required for autophagy-dependent cycling of ATG9. This is Autophagy-related protein 27 (ATG27) from Saccharomyces cerevisiae (strain ATCC 204508 / S288c) (Baker's yeast).